We begin with the raw amino-acid sequence, 93 residues long: Cobalt transport protein CbiN (93 aa).

Transmembrane regions (helical) follow at residues 5–25 (LMLLVMVVALVILPFFINHGG) and 63–83 (LLFTLQGSLGAAVIFYILGYC).

Belongs to the CbiN family. Forms an energy-coupling factor (ECF) transporter complex composed of an ATP-binding protein (A component, CbiO), a transmembrane protein (T component, CbiQ) and 2 possible substrate-capture proteins (S components, CbiM and CbiN) of unknown stoichimetry.

It is found in the cell inner membrane. The protein operates within cofactor biosynthesis; adenosylcobalamin biosynthesis. Functionally, part of the energy-coupling factor (ECF) transporter complex CbiMNOQ involved in cobalt import. The sequence is that of Cobalt transport protein CbiN from Salmonella paratyphi B (strain ATCC BAA-1250 / SPB7).